Here is a 339-residue protein sequence, read N- to C-terminus: 4-hydroxy-2-oxovalerate aldolase 3 (339 aa).

Residues I7–A259 enclose the Pyruvate carboxyltransferase domain. Residue R15 to D16 participates in substrate binding. Residue D16 participates in Mn(2+) binding. The Proton acceptor role is filled by H19. Positions 169 and 198 each coordinate substrate. Residues H198 and H200 each contribute to the Mn(2+) site. Y289 is a binding site for substrate.

This sequence belongs to the 4-hydroxy-2-oxovalerate aldolase family.

The catalysed reaction is (S)-4-hydroxy-2-oxopentanoate = acetaldehyde + pyruvate. The sequence is that of 4-hydroxy-2-oxovalerate aldolase 3 from Rhodococcus opacus (strain B4).